A 408-amino-acid polypeptide reads, in one-letter code: uncharacterized protein (408 aa).

2 disordered regions span residues 184–206 (DENN…SILF) and 254–317 (NNKT…SSDS). Low complexity predominate over residues 187-206 (NNNSNNNNNNNSNNNSSILF).

This is an uncharacterized protein from Dictyostelium discoideum (Social amoeba).